Reading from the N-terminus, the 769-residue chain is MRLSLFALLVTVFSGVSTQSPIFGPQDVSSIEGNSVSITCYYPDTSVNRHTRKYWCRQGANGYCATLISSNGYLSKEYSGRASLINFPENSTFVINIAHLTQEDTGSYKCGLGTTNRGLFFDVSLEVSQVPEFPNDTHVYTKDIGRTVTIECRFKEGNAHSKKSLCKKRGEACEVVIDSTEYVDPSYKDRAILFMKGTSRDIFYVNISHLIPSDAGLYVCQAGEGPSADKNNADLQVLEPEPELLYKDLRSSVTFECDLGREVANDAKYLCRKNKETCDVIINTLGKRDPAFEGRILLTPRDDNGRFSVLITGLRKEDAGHYQCGAHSSGLPQEGWPVQAWQLFVNEESTIPNSRSVVKGVTGGSVAIVCPYNPKESSSLKYWCHWEADENGRCPVLVGTQALVQEGYEGRLALFDQPGSGAYTVILNQLTTQDSGFYWCLTDGDSRWRTTIELQVAEATKKPDLEVTPQNATAVIGETFTISCHYPCKFYSQEKYWCKWSNDGCHILPSHDEGARQSSVSCDQSSQIVSMTLNPVKKEDEGWYWCGVKEGQVYGETTAIYVAVEERTRGSPHINPTDANARAKDAPEEEAMESSVREDENKANLDPRLFADEREIQNAGDQAQENRASGNAGSAGGQSGSSKVLFSTLVPLGLVLAVGAVAVWVARVRHRKNVDRMSISSYRTDISMGDFRNSRDLGGNDNMGATPDTQETVLEGKDEIETTTECTTEPEESKKAKRSSKEEADMAYSAFLFQSSTIAAQVHDGPQEA.

A signal peptide spans 1 to 18; the sequence is MRLSLFALLVTVFSGVST. The Extracellular segment spans residues 19–643; that stretch reads QSPIFGPQDV…SAGGQSGSSK (625 aa). In terms of domain architecture, Ig-like V-type 1; required for binding to polymeric IgA and IgM spans 21–126; the sequence is PIFGPQDVSS…RGLFFDVSLE (106 aa). Cysteine 40 and cysteine 110 are joined by a disulfide. Residues asparagine 90, asparagine 135, and asparagine 206 are each glycosylated (N-linked (GlcNAc...) asparagine). Ig-like V-type domains lie at 135–237, 240–341, 353–457, and 463–563; these read NDTH…DLQV, PEPE…VQAW, NSRS…LQVA, and PDLE…IYVA. 3 cysteine pairs are disulfide-bonded: cysteine 152-cysteine 220, cysteine 257-cysteine 324, and cysteine 370-cysteine 440. A glycan (N-linked (GlcNAc...) asparagine) is linked at asparagine 471. A disulfide bridge links cysteine 484 with cysteine 546. Disordered stretches follow at residues 569–604 and 619–640; these read RGSPHINPTDANARAKDAPEEEAMESSVREDENKAN and AGDQAQENRASGNAGSAGGQSG. Positions 595-604 are enriched in basic and acidic residues; that stretch reads SVREDENKAN. A helical transmembrane segment spans residues 644 to 666; the sequence is VLFSTLVPLGLVLAVGAVAVWVA. The Cytoplasmic portion of the chain corresponds to 667-769; that stretch reads RVRHRKNVDR…AQVHDGPQEA (103 aa). Residues serine 678, serine 687, serine 694, and serine 740 each carry the phosphoserine modification. The tract at residues 719 to 741 is disordered; the sequence is EIETTTECTTEPEESKKAKRSSK. Residues 731-741 are compositionally biased toward basic and acidic residues; the sequence is EESKKAKRSSK.

As to quaternary structure, interacts (mainly via CDR1-like domain) with dimeric IgA. Interacts (mainly via CDR2-like domain) with pentameric IgM. In terms of assembly, either free or part of the secretory IgA (sIgA) complex that consists of two, four or five IgA monomers, and two additional non-Ig polypeptides, namely the JCHAIN and the secretory component (the proteolytic product of PIGR). Free secretory component interacts with bacterial antigens toxA of C.difficile and eae of E.coli. Post-translationally, N-glycosylated. N-glycosylation is required for anchoring IgA molecules to mucus, but is not necessary for Ig binding.

It is found in the cell membrane. The protein localises to the secreted. Mediates selective transcytosis of polymeric IgA and IgM across mucosal epithelial cells. Binds polymeric IgA and IgM at the basolateral surface of epithelial cells. The complex is then transported across the cell to be secreted at the apical surface. During this process, a cleavage occurs that separates the extracellular (known as the secretory component) from the transmembrane segment. In terms of biological role, through its N-linked glycans ensures anchoring of secretory IgA (sIgA) molecules to mucus lining the epithelial surface to neutralize extracellular pathogens. On its own (free form) may act as a non-specific microbial scavenger to prevent pathogen interaction with epithelial cells. This chain is Polymeric immunoglobulin receptor (Pigr), found in Rattus norvegicus (Rat).